The primary structure comprises 227 residues: MSGILGKLFGAGAGGKGAGKGPSPQEAIQRLRDTEEMLSKKQEFLEKKIEQELAAARKHGTKNKRAALQALKRKKRYEKQLAQIDGTLSTIEFQREALENANTNTEVLKNMGFAAKAMKAAHDNMDIDKVDELMQDIAEQQELADEISTAISKPVGFGEEFDEDELMAELEELEQEELDKNLLEISGPETVPLPNVPSISIPSKPAKKKEEEEDDDMKELEAWAGNM.

2 disordered regions span residues 1-26 and 186-227; these read MSGI…SPQE and SGPE…AGNM. A compositionally biased stretch (gly residues) spans 9 to 20; sequence FGAGAGGKGAGK. The stretch at 25–185 forms a coiled coil; sequence QEAIQRLRDT…EELDKNLLEI (161 aa).

This sequence belongs to the SNF7 family. Probable core component of the endosomal sorting required for transport complex III (ESCRT-III). ESCRT-III components are thought to multimerize to form a flat lattice on the perimeter membrane of the endosome.

It localises to the cytoplasm. It is found in the cytosol. The protein localises to the late endosome membrane. The protein resides in the midbody. Functionally, probable core component of the endosomal sorting required for transport complex III (ESCRT-III) which is involved in multivesicular bodies (MVBs) formation and sorting of endosomal cargo proteins into MVBs. MVBs contain intraluminal vesicles (ILVs) that are generated by invagination and scission from the limiting membrane of the endosome and mostly are delivered to lysosomes enabling degradation of membrane proteins, such as stimulated growth factor receptors, lysosomal enzymes and lipids. The protein is Charged multivesicular body protein 4b (CHMP4B) of Gallus gallus (Chicken).